The primary structure comprises 91 residues: DNA-directed RNA polymerase subunit omega (91 aa).

This sequence belongs to the RNA polymerase subunit omega family. The RNAP catalytic core consists of 2 alpha, 1 beta, 1 beta' and 1 omega subunit. When a sigma factor is associated with the core the holoenzyme is formed, which can initiate transcription.

The catalysed reaction is RNA(n) + a ribonucleoside 5'-triphosphate = RNA(n+1) + diphosphate. In terms of biological role, promotes RNA polymerase assembly. Latches the N- and C-terminal regions of the beta' subunit thereby facilitating its interaction with the beta and alpha subunits. This Actinobacillus pleuropneumoniae serotype 5b (strain L20) protein is DNA-directed RNA polymerase subunit omega.